We begin with the raw amino-acid sequence, 320 residues long: Endolytic peptidoglycan transglycosylase RlpA (320 aa).

This sequence belongs to the RlpA family.

Its function is as follows. Lytic transglycosylase with a strong preference for naked glycan strands that lack stem peptides. This chain is Endolytic peptidoglycan transglycosylase RlpA, found in Rickettsia prowazekii (strain Madrid E).